Here is a 56-residue protein sequence, read N- to C-terminus: MGHSNVWNSHPKKYGPGSRLCRVCGNSHGLIRKYGLNCCRQCFRSNAKEIGFIKYR.

The Zn(2+) site is built by Cys-21, Cys-24, Cys-39, and Cys-42.

Belongs to the universal ribosomal protein uS14 family. Zn(2+) serves as cofactor.

The chain is Small ribosomal subunit protein uS14z/uS14y/uS14x (RPS29A) from Arabidopsis thaliana (Mouse-ear cress).